We begin with the raw amino-acid sequence, 155 residues long: MLGRMTRNQLTEQIVVARLAKGLTWQELADAIGRPLLWTTSALLGQHPIPAELGRILVDKLGLDESAVPVLAAPPMRGGLPTAVPTDPTIYRFYEALQVYGGALKEVIAEQFGDGIMSAINFSVDLQKKPHPSGDRVVVTFDGKFLPYQWVSSEQ.

Residues R92, E95, and S118 contribute to the active site.

Belongs to the cyanase family.

The catalysed reaction is cyanate + hydrogencarbonate + 3 H(+) = NH4(+) + 2 CO2. Its function is as follows. Catalyzes the reaction of cyanate with bicarbonate to produce ammonia and carbon dioxide. This chain is Cyanate hydratase, found in Mycobacterium avium (strain 104).